Reading from the N-terminus, the 51-residue chain is Putative protein LomR (51 aa).

Belongs to the outer membrane OOP (TC 1.B.6) superfamily. Ail family.

The polypeptide is Putative protein LomR (lomR) (Escherichia coli (strain K12)).